Consider the following 989-residue polypeptide: Bifunctional glutamine synthetase adenylyltransferase/adenylyl-removing enzyme (989 aa).

The tract at residues 1-474 (MNSSAIDADI…HYGKLFEGDP (474 aa)) is adenylyl removase. The adenylyl transferase stretch occupies residues 480–989 (LPIDYAGGPD…FNRLIGGDSA (510 aa)).

This sequence belongs to the GlnE family. It depends on Mg(2+) as a cofactor.

It carries out the reaction [glutamine synthetase]-O(4)-(5'-adenylyl)-L-tyrosine + phosphate = [glutamine synthetase]-L-tyrosine + ADP. It catalyses the reaction [glutamine synthetase]-L-tyrosine + ATP = [glutamine synthetase]-O(4)-(5'-adenylyl)-L-tyrosine + diphosphate. Functionally, involved in the regulation of glutamine synthetase GlnA, a key enzyme in the process to assimilate ammonia. When cellular nitrogen levels are high, the C-terminal adenylyl transferase (AT) inactivates GlnA by covalent transfer of an adenylyl group from ATP to specific tyrosine residue of GlnA, thus reducing its activity. Conversely, when nitrogen levels are low, the N-terminal adenylyl removase (AR) activates GlnA by removing the adenylyl group by phosphorolysis, increasing its activity. The regulatory region of GlnE binds the signal transduction protein PII (GlnB) which indicates the nitrogen status of the cell. This chain is Bifunctional glutamine synthetase adenylyltransferase/adenylyl-removing enzyme, found in Rhodopseudomonas palustris (strain BisB5).